A 515-amino-acid polypeptide reads, in one-letter code: Nectin-1 (515 aa).

An N-terminal signal peptide occupies residues 1–30 (MARMGLAGAAGRWWGLALGLTAFFLPGAHT). In terms of domain architecture, Ig-like V-type spans 31 to 141 (QVVQVNDSMY…GNRESQLNLT (111 aa)). Residues 31–355 (QVVQVNDSMY…GRRAGQVPTA (325 aa)) are Extracellular-facing. N-linked (GlcNAc...) asparagine glycosylation is found at Asn36, Asn72, Asn139, Asn202, Asn286, Asn297, Asn307, and Asn332. A disulfide bond links Cys51 and Cys124. 2 Ig-like C2-type domains span residues 145 to 243 (KPTN…TLNV) and 247 to 334 (PEVT…VNIT). Disulfide bonds link Cys172–Cys226 and Cys269–Cys316. The interval 282–299 (WTTLNGSLPKGVEAQNRT) is interaction with FGFR. Residues 356–376 (IIGGVVGSILLVLFVVGGIVV) traverse the membrane as a helical segment. Over 377–515 (ALCRRRHTFK…SFISKKEWYV (139 aa)) the chain is Cytoplasmic. Residues 400 to 486 (YSKAGIPQHH…DGYGDRTLGY (87 aa)) form a disordered region. Phosphoserine occurs at positions 422, 434, and 435. Tyr436 carries the phosphotyrosine modification. A compositionally biased stretch (acidic residues) spans 436–445 (YEEEEEEEGG). Positions 446–464 (GGERKVGGPHPKYDEDAKR) are enriched in basic and acidic residues. A Phosphoserine modification is found at Ser509.

This sequence belongs to the nectin family. (Microbial infection) Interacts with herpes pseudorabies virus/PRV envelope glycoprotein D.

It is found in the cell membrane. Its subcellular location is the cell junction. The protein localises to the adherens junction. It localises to the presynaptic cell membrane. (Microbial infection) Acts as a receptor for herpes simplex virus 1/HHV-1, herpes simplex virus 2/HHV-2, and pseudorabies virus/PRV. This is Nectin-1 from Sus scrofa (Pig).